The primary structure comprises 1080 residues: Carbamoyl phosphate synthase large chain (1080 aa).

Residues 1–403 form a carboxyphosphate synthetic domain region; the sequence is MPKRTDLKTI…SLQKALRGLE (403 aa). Arg-129, Arg-169, Gly-175, Gly-176, Glu-208, Val-210, Glu-215, Gly-241, Val-242, His-243, Gln-285, and Glu-299 together coordinate ATP. Residues 133 to 328 enclose the ATP-grasp 1 domain; the sequence is RVAMGEIGLD…IAKVAAKLAV (196 aa). Mg(2+) contacts are provided by Gln-285, Glu-299, and Asn-301. Positions 285, 299, and 301 each coordinate Mn(2+). The interval 404–554 is oligomerization domain; the sequence is TGKIGLDPTG…YSTYEDECEA (151 aa). The interval 555–942 is carbamoyl phosphate synthetic domain; sequence LPSNRDKIMI…AFARAQEAGG (388 aa). The region spanning 679-876 is the ATP-grasp 2 domain; that stretch reads QQLVDKLGLK…LAKIAARCMA (198 aa). Arg-715, Arg-754, Leu-756, Glu-761, Gly-787, Val-788, His-789, Ser-790, Gln-830, and Glu-847 together coordinate ATP. Residues Gln-830, Glu-847, and Asn-849 each coordinate Mg(2+). Residues Gln-830, Glu-847, and Asn-849 each contribute to the Mn(2+) site. The MGS-like domain occupies 943-1080; the sequence is IKAPPLGKAF…LQELHKELEA (138 aa). Residues 943-1080 are allosteric domain; the sequence is IKAPPLGKAF…LQELHKELEA (138 aa).

It belongs to the CarB family. In terms of assembly, composed of two chains; the small (or glutamine) chain promotes the hydrolysis of glutamine to ammonia, which is used by the large (or ammonia) chain to synthesize carbamoyl phosphate. Tetramer of heterodimers (alpha,beta)4. Mg(2+) is required as a cofactor. It depends on Mn(2+) as a cofactor.

It catalyses the reaction hydrogencarbonate + L-glutamine + 2 ATP + H2O = carbamoyl phosphate + L-glutamate + 2 ADP + phosphate + 2 H(+). It carries out the reaction hydrogencarbonate + NH4(+) + 2 ATP = carbamoyl phosphate + 2 ADP + phosphate + 2 H(+). The protein operates within amino-acid biosynthesis; L-arginine biosynthesis; carbamoyl phosphate from bicarbonate: step 1/1. It participates in pyrimidine metabolism; UMP biosynthesis via de novo pathway; (S)-dihydroorotate from bicarbonate: step 1/3. Large subunit of the glutamine-dependent carbamoyl phosphate synthetase (CPSase). CPSase catalyzes the formation of carbamoyl phosphate from the ammonia moiety of glutamine, carbonate, and phosphate donated by ATP, constituting the first step of 2 biosynthetic pathways, one leading to arginine and/or urea and the other to pyrimidine nucleotides. The large subunit (synthetase) binds the substrates ammonia (free or transferred from glutamine from the small subunit), hydrogencarbonate and ATP and carries out an ATP-coupled ligase reaction, activating hydrogencarbonate by forming carboxy phosphate which reacts with ammonia to form carbamoyl phosphate. The polypeptide is Carbamoyl phosphate synthase large chain (Xanthomonas campestris pv. campestris (strain ATCC 33913 / DSM 3586 / NCPPB 528 / LMG 568 / P 25)).